Reading from the N-terminus, the 355-residue chain is Probable poly-beta-1,6-N-acetyl-D-glucosamine export protein (355 aa).

10 helical membrane-spanning segments follow: residues 13–30 (AFIC…QITL), 45–67 (YIRN…LTTL), 74–96 (INYL…LFYS), 116–138 (VLGQ…SYII), 145–167 (LFNS…HYFL), 187–204 (MILG…IGYN), 211–233 (FLEK…FIAV), 243–262 (SFTY…LLGV), 269–291 (MLLN…HPII), and 306–328 (TIVF…GMML).

It belongs to the acyltransferase 3 family.

It localises to the cell membrane. Its function is as follows. Presumably involved in the export of the biofilm adhesin polysaccharide poly-beta-1,6-N-acetyl-D-glucosamine (PNAG, also referred to as PIA) across the cell membrane. This Staphylococcus epidermidis protein is Probable poly-beta-1,6-N-acetyl-D-glucosamine export protein (icaC).